The following is a 165-amino-acid chain: Large ribosomal subunit protein uL10 (165 aa).

Belongs to the universal ribosomal protein uL10 family. As to quaternary structure, part of the ribosomal stalk of the 50S ribosomal subunit. The N-terminus interacts with L11 and the large rRNA to form the base of the stalk. The C-terminus forms an elongated spine to which L12 dimers bind in a sequential fashion forming a multimeric L10(L12)X complex.

Its function is as follows. Forms part of the ribosomal stalk, playing a central role in the interaction of the ribosome with GTP-bound translation factors. The chain is Large ribosomal subunit protein uL10 from Buchnera aphidicola subsp. Schizaphis graminum (strain Sg).